A 358-amino-acid polypeptide reads, in one-letter code: Ganglioside-induced differentiation-associated protein 1 (358 aa).

In terms of domain architecture, GST N-terminal spans 24–105; the sequence is VHLILYHWTH…YLEQTFLDER (82 aa). Residues lysine 50, lysine 172, lysine 173, lysine 188, and lysine 190 each participate in a glycyl lysine isopeptide (Lys-Gly) (interchain with G-Cter in ubiquitin) cross-link. The 157-residue stretch at 153-309 folds into the GST C-terminal domain; the sequence is PAYATTRIRS…LISAVLPTAF (157 aa). Lysine 203 carries the post-translational modification N6-acetyllysine; alternate. Lysine 203 participates in a covalent cross-link: Glycyl lysine isopeptide (Lys-Gly) (interchain with G-Cter in ubiquitin); alternate. Residues lysine 206, lysine 207, and lysine 214 each participate in a glycyl lysine isopeptide (Lys-Gly) (interchain with G-Cter in ubiquitin) cross-link. 2 helical membrane-spanning segments follow: residues 292 to 312 and 320 to 340; these read VLGH…FRVA and LGST…FMLF. The required for mitochondrial localization stretch occupies residues 320 to 358; sequence LGSTLVVGLLVGMGYFAFMLFRRRLGSMILALRPRPNYF.

The protein belongs to the GST superfamily. As to quaternary structure, homodimer. Ubiquitinated by PRKN during mitophagy, leading to its degradation and enhancement of mitophagy. Deubiquitinated by USP30. In terms of tissue distribution, expressed in brain, spinal cord, muscles and intestinal villi. In the central nervous system expressed most prominently in the cortex, cerebellum, thalamus, olfactory bulb, and spinal cord. Expressed also in sciatic nerves and in dorsal root ganglia.

It is found in the mitochondrion outer membrane. Its subcellular location is the cytoplasm. Regulates the mitochondrial network by promoting mitochondrial fission. The chain is Ganglioside-induced differentiation-associated protein 1 (Gdap1) from Mus musculus (Mouse).